The chain runs to 422 residues: UDP-N-acetylglucosamine 1-carboxyvinyltransferase (422 aa).

Residue 22 to 23 participates in phosphoenolpyruvate binding; the sequence is KN. Arg-94 contacts UDP-N-acetyl-alpha-D-glucosamine. Residue Cys-118 is the Proton donor of the active site. At Cys-118 the chain carries 2-(S-cysteinyl)pyruvic acid O-phosphothioketal. Residues 123 to 127, Asp-309, and Leu-331 each bind UDP-N-acetyl-alpha-D-glucosamine; that span reads RPIDL.

Belongs to the EPSP synthase family. MurA subfamily.

It is found in the cytoplasm. It carries out the reaction phosphoenolpyruvate + UDP-N-acetyl-alpha-D-glucosamine = UDP-N-acetyl-3-O-(1-carboxyvinyl)-alpha-D-glucosamine + phosphate. The protein operates within cell wall biogenesis; peptidoglycan biosynthesis. Functionally, cell wall formation. Adds enolpyruvyl to UDP-N-acetylglucosamine. The polypeptide is UDP-N-acetylglucosamine 1-carboxyvinyltransferase (Sulfurimonas denitrificans (strain ATCC 33889 / DSM 1251) (Thiomicrospira denitrificans (strain ATCC 33889 / DSM 1251))).